We begin with the raw amino-acid sequence, 513 residues long: MQLNASEISSFIKDKIADYDNKVENKAEGTIVNVSDGIVQIQGLSQAMLGEMIELPNGNFALAMNLERDSVGAVVLGAYEHLREGDKVHCTGRILEVPVGRGLLGRVVDALGNPIDGKGKIDAEGSSPVEKIAPGVIERQSVDQPLQTGLKAIDSMVPLGRGQRELIIGDRQTGKTAIAIDAIINQKNTGVICIYVAIGQKASSIASVVRKLEEADALKHTIVVAASASTSAAMQYIAPYSGCAMGEFFRDRGEDALIIYDDLTKQAWAYRQVSLLLRRPPGREAYPGDVFYLHSRLLERAARINAKEVERLTAGKVKGKTGSLTALPIIETQAGDVSAFVPTNVISITDGQIFLETDLFNSGIRPAINAGLSVSRVGGAAQTQIIKKLGGGIRLALAQYRELAAFAQFASDLDEATRKQLEHGQRVTELMKQKQYAPLSVAEMAISLFAADKGYLDTVAVEDIMAYETALLSFMRENHADLMNTINTTGKYDEAVQTGLKEALDAFVEKRSL.

169 to 176 contacts ATP; sequence GDRQTGKT.

The protein belongs to the ATPase alpha/beta chains family. In terms of assembly, F-type ATPases have 2 components, CF(1) - the catalytic core - and CF(0) - the membrane proton channel. CF(1) has five subunits: alpha(3), beta(3), gamma(1), delta(1), epsilon(1). CF(0) has three main subunits: a(1), b(2) and c(9-12). The alpha and beta chains form an alternating ring which encloses part of the gamma chain. CF(1) is attached to CF(0) by a central stalk formed by the gamma and epsilon chains, while a peripheral stalk is formed by the delta and b chains.

The protein resides in the cell inner membrane. It carries out the reaction ATP + H2O + 4 H(+)(in) = ADP + phosphate + 5 H(+)(out). Produces ATP from ADP in the presence of a proton gradient across the membrane. The alpha chain is a regulatory subunit. The sequence is that of ATP synthase subunit alpha from Dichelobacter nodosus (strain VCS1703A).